Here is a 348-residue protein sequence, read N- to C-terminus: Alcohol dehydrogenase 2 (348 aa).

Residue serine 2 is modified to N-acetylserine. The Zn(2+) site is built by cysteine 44, histidine 67, cysteine 98, cysteine 101, cysteine 104, cysteine 112, and cysteine 154. NAD(+) contacts are provided by residues 178 to 184 (GAAGGLG), aspartate 202, lysine 207, 269 to 271 (VGL), and arginine 341.

This sequence belongs to the zinc-containing alcohol dehydrogenase family. Homotetramer. Zn(2+) is required as a cofactor.

The protein resides in the cytoplasm. It catalyses the reaction a primary alcohol + NAD(+) = an aldehyde + NADH + H(+). The enzyme catalyses a secondary alcohol + NAD(+) = a ketone + NADH + H(+). The sequence is that of Alcohol dehydrogenase 2 (ADH2) from Kluyveromyces marxianus (Yeast).